The following is a 366-amino-acid chain: Histidinol-phosphate aminotransferase 2 (366 aa).

Residue lysine 226 is modified to N6-(pyridoxal phosphate)lysine.

This sequence belongs to the class-II pyridoxal-phosphate-dependent aminotransferase family. Histidinol-phosphate aminotransferase subfamily. As to quaternary structure, homodimer. The cofactor is pyridoxal 5'-phosphate.

The enzyme catalyses L-histidinol phosphate + 2-oxoglutarate = 3-(imidazol-4-yl)-2-oxopropyl phosphate + L-glutamate. It participates in amino-acid biosynthesis; L-histidine biosynthesis; L-histidine from 5-phospho-alpha-D-ribose 1-diphosphate: step 7/9. The sequence is that of Histidinol-phosphate aminotransferase 2 (hisC2) from Haemophilus influenzae (strain ATCC 51907 / DSM 11121 / KW20 / Rd).